The sequence spans 440 residues: MENIQKLIARYPLVADLVALKETTWFNPGATSLAQGLPYVGLTEQDVNAAHDRLARFAPYLAKAFPETAAAGGMIESDMVAIPAMQKRLEKEYGQTIDGEMLLKKDSHLAISGSIKARGGIYEVLTHAEKLALEAGLLTTDDDYSVLLSPGFKQFFSRYSIAVGSTGNLGLSIGIMSACIGFKVTVHMSADARAWKKAKLRRHGVTVVEYEDDYGVAVEQGRKAAQADPNCFFIDDENSRTLFLGYAVAGQRLKAQFAQQGRVVDASHPLFVYLPCGVGGGPGGVAFGLKLAFGDNVHCFFAEPTHSPCMLLGVYTGLHDAISVQDIGIDNLTAADGLAVGRASGFVGRAMERLLDGLYTLDDQTMYDMLGWLAQEEGIRLEPSALAGMAGPQRICAAAAYPQKLGFGQALLDNATHLVWATGGGMVPEDEMEQYLAKGR.

Lys-116 bears the N6-(pyridoxal phosphate)lysine mark.

It belongs to the serine/threonine dehydratase family. DsdA subfamily. Monomer. Pyridoxal 5'-phosphate is required as a cofactor.

It carries out the reaction D-serine = pyruvate + NH4(+). The chain is D-serine dehydratase from Salmonella arizonae (strain ATCC BAA-731 / CDC346-86 / RSK2980).